The sequence spans 187 residues: Protein GrpE (187 aa).

Residues 1–25 (MADEQNLDNRAPEETPAAEGTSAGE) form a disordered region.

This sequence belongs to the GrpE family. Homodimer.

It is found in the cytoplasm. Its function is as follows. Participates actively in the response to hyperosmotic and heat shock by preventing the aggregation of stress-denatured proteins, in association with DnaK and GrpE. It is the nucleotide exchange factor for DnaK and may function as a thermosensor. Unfolded proteins bind initially to DnaJ; upon interaction with the DnaJ-bound protein, DnaK hydrolyzes its bound ATP, resulting in the formation of a stable complex. GrpE releases ADP from DnaK; ATP binding to DnaK triggers the release of the substrate protein, thus completing the reaction cycle. Several rounds of ATP-dependent interactions between DnaJ, DnaK and GrpE are required for fully efficient folding. In Azotobacter vinelandii (strain DJ / ATCC BAA-1303), this protein is Protein GrpE.